The primary structure comprises 125 residues: Class III hydrophobin G (125 aa).

An N-terminal signal peptide occupies residues 1–20 (MKPSIVTFLMLAAVTAAVSA). Disulfide bonds link Cys54/Cys107, Cys60/Cys101, Cys61/Cys94, and Cys108/Cys122.

Belongs to the fungal hydrophobin family. In terms of assembly, self-assembles to form functional amyloid fibrils called rodlets. Self-assembly into fibrillar rodlets occurs spontaneously at hydrophobic:hydrophilic interfaces and the rodlets further associate laterally to form amphipathic monolayers.

The protein resides in the secreted. Its subcellular location is the cell wall. Aerial growth, conidiation, and dispersal of filamentous fungi in the environment rely upon a capability of their secreting small amphipathic proteins called hydrophobins (HPBs) with low sequence identity. Class I can self-assemble into an outermost layer of rodlet bundles on aerial cell surfaces, conferring cellular hydrophobicity that supports fungal growth, development and dispersal; whereas Class II form highly ordered films at water-air interfaces through intermolecular interactions but contribute nothing to the rodlet structure. RodF and rodG belong to Class III, which contains hydrophobins with intermediate (between classes I and II) or atypical characteristics. RodG, unlike rodA, is not required for rodlet formation. The chain is Class III hydrophobin G from Aspergillus fumigatus (strain ATCC MYA-4609 / CBS 101355 / FGSC A1100 / Af293) (Neosartorya fumigata).